A 1044-amino-acid polypeptide reads, in one-letter code: MFKKVENKVHFPQLEEKILQFWNHNKIFEKSMKQREGCEEFTFYDGPPFATGLPHFGHFVPNTIKDIIPRYQTMKGKNVKRYFGWDTHGLPVEYEVEKSLKLSGRYEIEQYGIDKFNEECRNIVLRYTKEWKKIITRLGRWVDFENNYKTMDLTFMESVWWVFKTLYNKGLIYESYYVLPYSPKLATPLSNFEVNLGEYKEIHDPSLTIKFKIKDKNEYLLAWTTTPWTLPTNLGIAVGKDIDYSKVVDQEKNEIYIIGTKRLNHYYQDENKYVIIEQFKGEHLKGIEYEPLFDYFVNQRNKGAFKIHTAEYVTTDDGTGIVHIAPFGEEDYQILKKNTQTDMITPIDAECKFTSEVKDFEGLFVKDADNKIIEKLKSMNLLFKRENYLHRYPFCYRTNSPLIYRPISSWFVNIEKIKEKLIRSNEQINWIPEHLKKGRFGKWLENARDWAISRNRFWGNPIPIWKCSKTGNKICIGSREELEKLSGQKIIDLHKDKIDKITWPSKYGGTYVRTSEVLDCWFESGSMPYASKHYPFKDKDKFQNIFPADFIAEGLDQTRGWFYTLTILGTALFEKTAFKNVIVNGLVLSSDGKKMSKSLKNYTDPIQIINTFGADALRLYLIMSPVIKADDLKYSDDGVKDVLKNIIIPIWNAYSFFITYAIIDKFTPNNYVNLYKTNILDKWIISEIESLKQILNEEIDKYNLTKSIEVLLTFIDKLNNWYIRRSRRRFWKSENDNDKIDAYETLYYTLKNLMLMLAPFIPFLTEEIYQNLKTKNEKESIHLNNYPQSIKELINIELEEKMNFTRKVITIARALRASHNIKIRKPIKTIYIITKNHKEQNTLREMTEIILEEINAKEIKIKSNEEELVTYKAKANFKELGSKLGTNMKSVALAITKLSNEDILEIINGNKHTITINNNTYDITLKDIILERHERKNLKVINEDSITIGLDTLITEELYLEGLSRELIRKVQNLRKESNFNVTDRIILYTNNDEILTKIINNFENYIKTETLAITIEINNKKALTTLELDEEISVNIGIEKCLN.

The 'HIGH' region signature appears at 48–58 (PFATGLPHFGH). Positions 594–598 (KMSKS) match the 'KMSKS' region motif. K597 contacts ATP.

It belongs to the class-I aminoacyl-tRNA synthetase family. IleS type 2 subfamily. As to quaternary structure, monomer. It depends on Zn(2+) as a cofactor.

It localises to the cytoplasm. The catalysed reaction is tRNA(Ile) + L-isoleucine + ATP = L-isoleucyl-tRNA(Ile) + AMP + diphosphate. Functionally, catalyzes the attachment of isoleucine to tRNA(Ile). As IleRS can inadvertently accommodate and process structurally similar amino acids such as valine, to avoid such errors it has two additional distinct tRNA(Ile)-dependent editing activities. One activity is designated as 'pretransfer' editing and involves the hydrolysis of activated Val-AMP. The other activity is designated 'posttransfer' editing and involves deacylation of mischarged Val-tRNA(Ile). The protein is Isoleucine--tRNA ligase of Borrelia recurrentis (strain A1).